The primary structure comprises 307 residues: MIKKRSILIVTRKSPLALWQAEFVKQQIENSHPHLACQILGCTTQGDRLTTEKLVDSGGKDLFVKDLQKALLNRDADIAVHSIKDMSACDGPELMVGAFIRREDPRDVLIVKGELSTLPPHAVIGTSSPRRQCQLKKFQPGCKIKEIRGNVGTRLAKLDAGHYEAIVLAAAGLKRLGLENRIHYYFDPHEFIPAIGQGAIGVECRSDDHEMQTLLKSLDHRETRLCVTAERAVNEKLGGDCFTPIAAHAIIKNDQLSLFAMLGKIDGRVIIRATEIGNSEEAKRIGFKVASQLLEQGGDSLLRELKQ.

S-(dipyrrolylmethanemethyl)cysteine is present on Cys241.

The protein belongs to the HMBS family. As to quaternary structure, monomer. Requires dipyrromethane as cofactor.

It catalyses the reaction 4 porphobilinogen + H2O = hydroxymethylbilane + 4 NH4(+). The protein operates within porphyrin-containing compound metabolism; protoporphyrin-IX biosynthesis; coproporphyrinogen-III from 5-aminolevulinate: step 2/4. In terms of biological role, tetrapolymerization of the monopyrrole PBG into the hydroxymethylbilane pre-uroporphyrinogen in several discrete steps. The chain is Porphobilinogen deaminase from Coxiella burnetii (strain CbuG_Q212) (Coxiella burnetii (strain Q212)).